The chain runs to 213 residues: Phosphatidylserine decarboxylase proenzyme (213 aa).

The active-site Schiff-base intermediate with substrate; via pyruvic acid is the serine 182. Serine 182 is modified (pyruvic acid (Ser); by autocatalysis).

It belongs to the phosphatidylserine decarboxylase family. PSD-A subfamily. Heterodimer of a large membrane-associated beta subunit and a small pyruvoyl-containing alpha subunit. Pyruvate is required as a cofactor. Is synthesized initially as an inactive proenzyme. Formation of the active enzyme involves a self-maturation process in which the active site pyruvoyl group is generated from an internal serine residue via an autocatalytic post-translational modification. Two non-identical subunits are generated from the proenzyme in this reaction, and the pyruvate is formed at the N-terminus of the alpha chain, which is derived from the carboxyl end of the proenzyme. The post-translation cleavage follows an unusual pathway, termed non-hydrolytic serinolysis, in which the side chain hydroxyl group of the serine supplies its oxygen atom to form the C-terminus of the beta chain, while the remainder of the serine residue undergoes an oxidative deamination to produce ammonia and the pyruvoyl prosthetic group on the alpha chain.

It is found in the cell membrane. It carries out the reaction a 1,2-diacyl-sn-glycero-3-phospho-L-serine + H(+) = a 1,2-diacyl-sn-glycero-3-phosphoethanolamine + CO2. Its pathway is phospholipid metabolism; phosphatidylethanolamine biosynthesis; phosphatidylethanolamine from CDP-diacylglycerol: step 2/2. Its function is as follows. Catalyzes the formation of phosphatidylethanolamine (PtdEtn) from phosphatidylserine (PtdSer). The chain is Phosphatidylserine decarboxylase proenzyme from Geotalea daltonii (strain DSM 22248 / JCM 15807 / FRC-32) (Geobacter daltonii).